The chain runs to 122 residues: Large ribosomal subunit protein bL12 (122 aa).

The protein belongs to the bacterial ribosomal protein bL12 family. In terms of assembly, homodimer. Part of the ribosomal stalk of the 50S ribosomal subunit. Forms a multimeric L10(L12)X complex, where L10 forms an elongated spine to which 2 to 4 L12 dimers bind in a sequential fashion. Binds GTP-bound translation factors.

In terms of biological role, forms part of the ribosomal stalk which helps the ribosome interact with GTP-bound translation factors. Is thus essential for accurate translation. This is Large ribosomal subunit protein bL12 from Shewanella denitrificans (strain OS217 / ATCC BAA-1090 / DSM 15013).